Here is a 179-residue protein sequence, read N- to C-terminus: Large ribosomal subunit protein uL5 (179 aa).

Belongs to the universal ribosomal protein uL5 family. In terms of assembly, part of the 50S ribosomal subunit; part of the 5S rRNA/L5/L18/L25 subcomplex. Contacts the 5S rRNA and the P site tRNA. Forms a bridge to the 30S subunit in the 70S ribosome.

This is one of the proteins that bind and probably mediate the attachment of the 5S RNA into the large ribosomal subunit, where it forms part of the central protuberance. In the 70S ribosome it contacts protein S13 of the 30S subunit (bridge B1b), connecting the 2 subunits; this bridge is implicated in subunit movement. Contacts the P site tRNA; the 5S rRNA and some of its associated proteins might help stabilize positioning of ribosome-bound tRNAs. This is Large ribosomal subunit protein uL5 from Dehalococcoides mccartyi (strain ATCC BAA-2266 / KCTC 15142 / 195) (Dehalococcoides ethenogenes (strain 195)).